The sequence spans 196 residues: Carnitine operon protein CaiE (196 aa).

A disordered region spans residues 173–196 (TQPLRQMEENRPRLQGTTDVTPKR). The span at 187-196 (QGTTDVTPKR) shows a compositional bias: polar residues.

This sequence belongs to the transferase hexapeptide repeat family.

It functions in the pathway amine and polyamine metabolism; carnitine metabolism. Functionally, overproduction of CaiE stimulates the activity of CaiB and CaiD. The protein is Carnitine operon protein CaiE of Escherichia coli O127:H6 (strain E2348/69 / EPEC).